We begin with the raw amino-acid sequence, 96 residues long: Small ribosomal subunit protein bS6 (96 aa).

The protein belongs to the bacterial ribosomal protein bS6 family.

Its function is as follows. Binds together with bS18 to 16S ribosomal RNA. The polypeptide is Small ribosomal subunit protein bS6 (Cutibacterium acnes (strain DSM 16379 / KPA171202) (Propionibacterium acnes)).